A 398-amino-acid polypeptide reads, in one-letter code: uncharacterized protein (398 aa).

An N-terminal signal peptide occupies residues 1–22 (MKLKFYKLPLITTAFSFVFLTA). The N-palmitoyl cysteine moiety is linked to residue Cys-23. Residue Cys-23 is the site of S-diacylglycerol cysteine attachment.

Its subcellular location is the cell membrane. This is an uncharacterized protein from Mycoplasma genitalium (strain ATCC 33530 / DSM 19775 / NCTC 10195 / G37) (Mycoplasmoides genitalium).